A 73-amino-acid polypeptide reads, in one-letter code: Putative membrane protein insertion efficiency factor (73 aa).

This sequence belongs to the UPF0161 family.

Its subcellular location is the cell inner membrane. In terms of biological role, could be involved in insertion of integral membrane proteins into the membrane. This Rickettsia bellii (strain RML369-C) protein is Putative membrane protein insertion efficiency factor.